The primary structure comprises 318 residues: Acetyl-coenzyme A carboxylase carboxyl transferase subunit alpha (318 aa).

One can recognise a CoA carboxyltransferase C-terminal domain in the interval 43–293 (RSQTALRDLY…GDGIAAALKS (251 aa)).

Belongs to the AccA family. In terms of assembly, acetyl-CoA carboxylase is a heterohexamer composed of biotin carboxyl carrier protein (AccB), biotin carboxylase (AccC) and two subunits each of ACCase subunit alpha (AccA) and ACCase subunit beta (AccD).

It localises to the cytoplasm. The catalysed reaction is N(6)-carboxybiotinyl-L-lysyl-[protein] + acetyl-CoA = N(6)-biotinyl-L-lysyl-[protein] + malonyl-CoA. It functions in the pathway lipid metabolism; malonyl-CoA biosynthesis; malonyl-CoA from acetyl-CoA: step 1/1. In terms of biological role, component of the acetyl coenzyme A carboxylase (ACC) complex. First, biotin carboxylase catalyzes the carboxylation of biotin on its carrier protein (BCCP) and then the CO(2) group is transferred by the carboxyltransferase to acetyl-CoA to form malonyl-CoA. The polypeptide is Acetyl-coenzyme A carboxylase carboxyl transferase subunit alpha (Bartonella bacilliformis (strain ATCC 35685 / KC583 / Herrer 020/F12,63)).